A 541-amino-acid polypeptide reads, in one-letter code: Berberine bridge enzyme-like 1 (541 aa).

A signal peptide spans 1–20 (MKLSCLVFLIVSSLVSSSLA). 7 N-linked (GlcNAc...) asparagine glycosylation sites follow: asparagine 25, asparagine 38, asparagine 73, asparagine 136, asparagine 302, asparagine 339, and asparagine 357. Cysteine 35 and cysteine 98 are disulfide-bonded. The region spanning 76–255 (TSPKPLLVIA…LSFKIKLVPV (180 aa)) is the FAD-binding PCMH-type domain. Residues 113 to 180 (HDYDGVSYIS…GTHGFPAGVC (68 aa)) constitute a cross-link (6-(S-cysteinyl)-8alpha-(pros-histidyl)-FAD (His-Cys)).

Belongs to the oxygen-dependent FAD-linked oxidoreductase family. FAD serves as cofactor. The FAD cofactor is bound via a bicovalent 6-S-cysteinyl, 8alpha-N1-histidyl FAD linkage. As to expression, accumulates in cell walls of etiolated hypocotyls.

It localises to the secreted. It is found in the cell wall. This Arabidopsis thaliana (Mouse-ear cress) protein is Berberine bridge enzyme-like 1.